A 565-amino-acid chain; its full sequence is Adenine deaminase (565 aa).

This sequence belongs to the metallo-dependent hydrolases superfamily. Adenine deaminase family. The cofactor is Mn(2+).

It catalyses the reaction adenine + H2O + H(+) = hypoxanthine + NH4(+). This is Adenine deaminase from Methylobacterium nodulans (strain LMG 21967 / CNCM I-2342 / ORS 2060).